We begin with the raw amino-acid sequence, 178 residues long: Caveolin-1 (178 aa).

Serine 2 carries the post-translational modification N-acetylserine. Serine 2 bears the Phosphoserine mark. The required for homooligomerization stretch occupies residues 2-94 (SGGKYVDSEG…WKASFTTFTV (93 aa)). At 2 to 104 (SGGKYVDSEG…TKYWFYRLLS (103 aa)) the chain is on the cytoplasmic side. The residue at position 5 (lysine 5) is an N6-acetyllysine; alternate. Lysine 5 is covalently cross-linked (Glycyl lysine isopeptide (Lys-Gly) (interchain with G-Cter in ubiquitin); alternate). Tyrosine 6 carries the post-translational modification Phosphotyrosine. At serine 9 the chain carries Phosphoserine. Phosphotyrosine; by ABL1 is present on tyrosine 14. A Phosphotyrosine modification is found at tyrosine 25. Glycyl lysine isopeptide (Lys-Gly) (interchain with G-Cter in ubiquitin) cross-links involve residues lysine 26, lysine 30, lysine 39, lysine 47, and lysine 57. The segment at 82–94 (DGIWKASFTTFTV) is interaction with CAVIN3. Residues 105–125 (ALFGIPMALIWGIYFAILSFL) constitute an intramembrane region (helical). The Cytoplasmic portion of the chain corresponds to 126 to 178 (HIWAVVPCIKSFLIEIQCISRVYSIYVHTFCDPLFEAIGKIFSNIRINTQKEI). An interacts with SPRY1, SPRY2, SPRY3 and SPRY4 region spans residues 131–142 (VPCIKSFLIEIQ). Residues cysteine 133, cysteine 143, and cysteine 156 are each lipidated (S-palmitoyl cysteine). Positions 149-160 (SIYVHTFCDPLF) are interacts with SPRY1, SPRY2, and SPRY4. Residues 167–178 (FSNIRINTQKEI) are interacts with SPRY1, SPRY2, SPRY3 and SPRY4.

Belongs to the caveolin family. As to quaternary structure, homooligomer. Interacts with GLIPR2. Interacts with NOSTRIN. Interacts with SNAP25 and STX1A. Interacts (via the N-terminus) with DPP4; the interaction is direct. Interacts with CTNNB1, CDH1 and JUP. Interacts with PACSIN2; this interaction induces membrane tubulation. Interacts with SLC7A9. Interacts with BMX and BTK. Interacts with TGFBR1. Interacts with CAVIN3 (via leucine-zipper domain) in a cholesterol-sensitive manner. Interacts with CAVIN1. Interacts with EHD2 in a cholesterol-dependent manner. Forms a ternary complex with UBXN6 and VCP; mediates CAV1 targeting to lysosomes for degradation. Interacts with ABCG1; this interaction regulates ABCG1-mediated cholesterol efflux. Interacts with NEU3; this interaction enhances NEU3 sialidase activity within caveola. Interacts (via C-terminus) with SPRY1, SPRY2 (via C-terminus), SPRY3, and SPRY4. Interacts with IGFBP5; this interaction allows trafficking of IGFBP5 from the plasma membrane to the nucleus. In terms of processing, phosphorylated at Tyr-14 by ABL1 in response to oxidative stress. Post-translationally, ubiquitinated. Undergo monoubiquitination and multi- and/or polyubiquitination. Monoubiquitination of N-terminal lysines promotes integration in a ternary complex with UBXN6 and VCP which promotes oligomeric CAV1 targeting to lysosomes for degradation. Ubiquitinated by ZNRF1; leading to degradation and modulation of the TLR4-mediated immune response.

The protein resides in the golgi apparatus membrane. Its subcellular location is the cell membrane. It localises to the membrane. It is found in the caveola. The protein localises to the membrane raft. Functionally, may act as a scaffolding protein within caveolar membranes. Forms a stable heterooligomeric complex with CAV2 that targets to lipid rafts and drives caveolae formation. Mediates the recruitment of CAVIN proteins (CAVIN1/2/3/4) to the caveolae. Interacts directly with G-protein alpha subunits and can functionally regulate their activity. Involved in the costimulatory signal essential for T-cell receptor (TCR)-mediated T-cell activation. Its binding to DPP4 induces T-cell proliferation and NF-kappa-B activation in a T-cell receptor/CD3-dependent manner. Recruits CTNNB1 to caveolar membranes and may regulate CTNNB1-mediated signaling through the Wnt pathway. Negatively regulates TGFB1-mediated activation of SMAD2/3 by mediating the internalization of TGFBR1 from membrane rafts leading to its subsequent degradation. Binds 20(S)-hydroxycholesterol (20(S)-OHC). This chain is Caveolin-1 (CAV1), found in Bos taurus (Bovine).